Reading from the N-terminus, the 245-residue chain is Tetraspanin-6 (245 aa).

Residues 1 to 19 (MASPSRRLQTKPVITCFKS) are Cytoplasmic-facing. Residues 20–40 (VLLIYTFIFWITGVILLAVGI) form a helical membrane-spanning segment. Topologically, residues 41-59 (WGKVSLENYFSLLNEKATN) are extracellular. A helical membrane pass occupies residues 60–80 (VPFVLIATGTVIILLGTFGCF). Over 81-93 (ATCRASAWMLKLY) the chain is Cytoplasmic. The chain crosses the membrane as a helical span at residues 94-114 (AMFLTLVFLVELVAAIVGFVF). Over 115–208 (RHEIKNSFKN…IKVMTIIESE (94 aa)) the chain is Extracellular. An N-linked (GlcNAc...) asparagine glycan is attached at Asn134. The helical transmembrane segment at 209–229 (MGVVAGISFGVACFQLIGIFL) threads the bilayer. At 230-245 (AYCLSRAITNNQYEIV) the chain is on the cytoplasmic side.

It belongs to the tetraspanin (TM4SF) family.

The protein resides in the membrane. In Homo sapiens (Human), this protein is Tetraspanin-6 (TSPAN6).